Reading from the N-terminus, the 388-residue chain is Pre-mRNA-splicing factor cwf2 (388 aa).

Positions 43–63 (VKRKKQPARKQIETRPEYEME) are disordered. The C3H1-type zinc finger occupies 111–138 (NPGSFFCLYFARGMCSEGSKCEYLHRLP). The region spanning 174–248 (YTLYVGGITP…ECLNVRWATT (75 aa)) is the RRM domain. The interval 331–352 (PNKSQSEEGSNDDHKSVTTTES) is disordered.

Belongs to the RRM CWC2 family. In terms of assembly, belongs to the 40S cdc5-associated complex (or cwf complex), a spliceosome sub-complex reminiscent of a late-stage spliceosome composed of the U2, U5 and U6 snRNAs and at least brr2, cdc5, cwf2/prp3, cwf3/syf1, cwf4/syf3, cwf5/ecm2, spp42/cwf6, cwf7/spf27, cwf8, cwf9, cwf10, cwf11, cwf12, prp45/cwf13, cwf14, cwf15, cwf16, cwf17, cwf18, cwf19, cwf20, cwf21, cwf22, cwf23, cwf24, cwf25, cwf26, cyp7/cwf27, cwf28, cwf29/ist3, lea1, msl1, prp5/cwf1, prp10, prp12/sap130, prp17, prp22, sap61, sap62, sap114, sap145, slu7, smb1, smd1, smd3, smf1, smg1 and syf2.

The protein localises to the nucleus. Its function is as follows. Involved in the first step of pre-mRNA splicing. Required for cell growth and cell cycle control. Plays a role in the levels of the U1, U4, U5 and U6 snRNAs and the maintenance of the U4/U6 snRNA complex. May provide the link between the 'nineteen complex' NTC spliceosome protein complex and the spliceosome through the U6 snRNA. Associates predominantly with U6 snRNAs in assembled active spliceosomes. Binds directly to the internal stem-loop (ISL) domain of the U6 snRNA and to the pre-mRNA intron near the 5' splice site during the activation and catalytic phases of the spliceosome cycle. Involved in pre-mRNA splicing. The sequence is that of Pre-mRNA-splicing factor cwf2 (cwf2) from Schizosaccharomyces pombe (strain 972 / ATCC 24843) (Fission yeast).